Reading from the N-terminus, the 467-residue chain is Cysteine--tRNA ligase (467 aa).

C29 lines the Zn(2+) pocket. Positions 31–41 (PTVYNYVHIGN) match the 'HIGH' region motif. Zn(2+) contacts are provided by C209, H234, and E238. The short motif at 267–271 (KMSKS) is the 'KMSKS' region element. K270 provides a ligand contact to ATP.

Belongs to the class-I aminoacyl-tRNA synthetase family. As to quaternary structure, monomer. It depends on Zn(2+) as a cofactor.

The protein localises to the cytoplasm. It carries out the reaction tRNA(Cys) + L-cysteine + ATP = L-cysteinyl-tRNA(Cys) + AMP + diphosphate. In Xylella fastidiosa (strain Temecula1 / ATCC 700964), this protein is Cysteine--tRNA ligase.